The chain runs to 207 residues: Small ribosomal subunit protein uS4c (207 aa).

In terms of domain architecture, S4 RNA-binding spans 92–155 (MRLDNILFRL…TYQSILSKRI (64 aa)).

It belongs to the universal ribosomal protein uS4 family. As to quaternary structure, part of the 30S ribosomal subunit. Contacts protein S5. The interaction surface between S4 and S5 is involved in control of translational fidelity.

It is found in the plastid. It localises to the chloroplast. Its function is as follows. One of the primary rRNA binding proteins, it binds directly to 16S rRNA where it nucleates assembly of the body of the 30S subunit. With S5 and S12 plays an important role in translational accuracy. The sequence is that of Small ribosomal subunit protein uS4c (rps4) from Equisetum scirpoides (Dwarf-scouring rush).